The primary structure comprises 230 residues: MSIIEMRDVVKKYDNGTTALRGVSVSVQPGEFAYIVGPSGAGKSTFIRSLYREVKIDKGSLSVAGFNLVKIKKKDVPLLRRSVGVVFQDYKLLPKKTVYENIAYAMEVIGENRRNIKRRVMEVLDLVGLKHKVRSFPNELSGGEQQRIAIARAIVNNPKVLIADEPTGNLDPDNSWEIMNLLERINLQGTTILMATHNSQIVNTLRHRVIAIENGRVVRDESKGEYGYDD.

The region spanning 4–229 is the ABC transporter domain; that stretch reads IEMRDVVKKY…DESKGEYGYD (226 aa). ATP is bound at residue 37-44; the sequence is GPSGAGKS.

Belongs to the ABC transporter superfamily. As to quaternary structure, homodimer. Interacts with FtsX; forms a membrane-associated complex. Interacts with pcsB.

It is found in the cell membrane. It carries out the reaction ATP + H2O = ADP + phosphate + H(+). Functionally, part of the ABC transporter FtsEX involved in cellular division. Has ATPase activity. Essential for cell division and viability. This is Cell division ATP-binding protein FtsE from Streptococcus pneumoniae serotype 2 (strain D39 / NCTC 7466).